A 199-amino-acid chain; its full sequence is N-(5'-phosphoribosyl)anthranilate isomerase (199 aa).

This sequence belongs to the TrpF family.

It catalyses the reaction N-(5-phospho-beta-D-ribosyl)anthranilate = 1-(2-carboxyphenylamino)-1-deoxy-D-ribulose 5-phosphate. It functions in the pathway amino-acid biosynthesis; L-tryptophan biosynthesis; L-tryptophan from chorismate: step 3/5. The chain is N-(5'-phosphoribosyl)anthranilate isomerase from Streptococcus pneumoniae (strain ATCC BAA-255 / R6).